A 214-amino-acid polypeptide reads, in one-letter code: Outer-membrane lipoprotein LolB (214 aa).

The first 25 residues, 1–25 (MNNLKRFTKSIFSCIALSGLLFLGG), serve as a signal peptide directing secretion. The N-palmitoyl cysteine moiety is linked to residue C26. C26 carries S-diacylglycerol cysteine lipidation.

This sequence belongs to the LolB family. As to quaternary structure, monomer.

The protein resides in the cell outer membrane. Plays a critical role in the incorporation of lipoproteins in the outer membrane after they are released by the LolA protein. This chain is Outer-membrane lipoprotein LolB, found in Shewanella sp. (strain MR-4).